Reading from the N-terminus, the 62-residue chain is SPbeta prophage-derived uncharacterized protein YonU (62 aa).

Positions 1-32 (MEKKFLDAIQQLTKELEMLKKDIDSIKEATVR) form a coiled coil.

This is SPbeta prophage-derived uncharacterized protein YonU (yonU) from Bacillus subtilis (strain 168).